A 272-amino-acid chain; its full sequence is Cell division protein ZipA (272 aa).

The Periplasmic segment spans residues 1–4 (METH). A helical transmembrane segment spans residues 5–25 (ILFFILAGLLIAVLIGYSIWS). Residues 26–272 (ARREKSRIFS…RQNYLLRVAN (247 aa)) are Cytoplasmic-facing.

The protein belongs to the ZipA family. Interacts with FtsZ via their C-terminal domains.

The protein localises to the cell inner membrane. In terms of biological role, essential cell division protein that stabilizes the FtsZ protofilaments by cross-linking them and that serves as a cytoplasmic membrane anchor for the Z ring. Also required for the recruitment to the septal ring of downstream cell division proteins. This Glaesserella parasuis serovar 5 (strain SH0165) (Haemophilus parasuis) protein is Cell division protein ZipA.